A 122-amino-acid chain; its full sequence is Large ribosomal subunit protein uL14 (122 aa).

It belongs to the universal ribosomal protein uL14 family. As to quaternary structure, part of the 50S ribosomal subunit. Forms a cluster with proteins L3 and L19. In the 70S ribosome, L14 and L19 interact and together make contacts with the 16S rRNA in bridges B5 and B8.

Its function is as follows. Binds to 23S rRNA. Forms part of two intersubunit bridges in the 70S ribosome. This Streptococcus uberis (strain ATCC BAA-854 / 0140J) protein is Large ribosomal subunit protein uL14.